We begin with the raw amino-acid sequence, 157 residues long: S-ribosylhomocysteine lyase (157 aa).

Fe cation is bound by residues His54, His58, and Cys124.

This sequence belongs to the LuxS family. Homodimer. Fe cation serves as cofactor.

The catalysed reaction is S-(5-deoxy-D-ribos-5-yl)-L-homocysteine = (S)-4,5-dihydroxypentane-2,3-dione + L-homocysteine. Its function is as follows. Involved in the synthesis of autoinducer 2 (AI-2) which is secreted by bacteria and is used to communicate both the cell density and the metabolic potential of the environment. The regulation of gene expression in response to changes in cell density is called quorum sensing. Catalyzes the transformation of S-ribosylhomocysteine (RHC) to homocysteine (HC) and 4,5-dihydroxy-2,3-pentadione (DPD). In Lactobacillus helveticus (strain DPC 4571), this protein is S-ribosylhomocysteine lyase.